We begin with the raw amino-acid sequence, 229 residues long: tRNA (guanine-N(7)-)-methyltransferase (229 aa).

Positions 59, 84, 111, and 134 each coordinate S-adenosyl-L-methionine. Residue Asp-134 is part of the active site. Lys-138 lines the substrate pocket. The segment at 140–145 (KHNKRR) is interaction with RNA. Residues Asp-170 and 207-210 (TKFE) contribute to the substrate site.

This sequence belongs to the class I-like SAM-binding methyltransferase superfamily. TrmB family.

It catalyses the reaction guanosine(46) in tRNA + S-adenosyl-L-methionine = N(7)-methylguanosine(46) in tRNA + S-adenosyl-L-homocysteine. It functions in the pathway tRNA modification; N(7)-methylguanine-tRNA biosynthesis. Functionally, catalyzes the formation of N(7)-methylguanine at position 46 (m7G46) in tRNA. The chain is tRNA (guanine-N(7)-)-methyltransferase from Saccharophagus degradans (strain 2-40 / ATCC 43961 / DSM 17024).